A 2334-amino-acid polypeptide reads, in one-letter code: Centriolin (2334 aa).

The segment at 1-70 (MKKGSERRLS…ESTVPLEPQQ (70 aa)) is disordered. Low complexity predominate over residues 21–38 (PGPSSLRSSMRSRSLSPL). LRR repeat units follow at residues 126-147 (KLEV…DKLL), 148-169 (RLRE…ENMC), 170-191 (NLQK…FAKK), and 194-215 (SLRV…SKLK). The 39-residue stretch at 228 to 266 (NPVVALPHYLQFIIFHLRSLESLEGQPVTTQDRQEAFER) folds into the LRRCT domain. Coiled-coil stretches lie at residues 265 to 343 (ERFS…VELT) and 437 to 800 (DLQL…LNHV). 2 disordered regions span residues 542 to 562 (DSLD…RGKE) and 751 to 771 (SLRD…ENNE). Ser-832 bears the Phosphoserine mark. The stretch at 858–1102 (EKEEAQVRER…ITRLRDVLNL (245 aa)) forms a coiled coil. Disordered regions lie at residues 1154–1198 (SKVS…PLPA), 1213–1245 (KSFS…VPPP), and 1338–1360 (LKSK…EEVD). Residues 1227–1238 (SQEESGLDDQEE) show a composition bias toward acidic residues. Residues 1320 to 2169 (EHHNLENEVS…MRTLKSEVKD (850 aa)) adopt a coiled-coil conformation. At Ser-1478 the chain carries Phosphoserine. Positions 1951 to 2121 (MMFQKLQKER…ELVAQDNHER (171 aa)) are required for centrosome localization. Positions 1988 to 2334 (QKSRLKQLLT…PLEEPNSYRH (347 aa)) are sufficient for interaction with HOOK2. Low complexity predominate over residues 2291–2307 (TSTSTDSASSPSLPSLV). The tract at residues 2291 to 2334 (TSTSTDSASSPSLPSLVEDSQHGHSQSSFQVLQVPLEEPNSYRH) is disordered.

Interacts with HOOK2. Interacts with EXOC6 and SNAPIN. Associates with the exocyst complex. In terms of tissue distribution, highly expressed in liver.

Its subcellular location is the cytoplasm. The protein localises to the cytoskeleton. The protein resides in the microtubule organizing center. It is found in the centrosome. It localises to the midbody. Its subcellular location is the midbody ring. Its function is as follows. Involved in cell cycle progression and cytokinesis. During the late steps of cytokinesis, anchors exocyst and SNARE complexes at the midbody, thereby allowing secretory vesicle-mediated abscission. The polypeptide is Centriolin (Cntrl) (Mus musculus (Mouse)).